A 122-amino-acid polypeptide reads, in one-letter code: Large ribosomal subunit protein eL18 (122 aa).

It belongs to the eukaryotic ribosomal protein eL18 family.

The sequence is that of Large ribosomal subunit protein eL18 from Thermoplasma volcanium (strain ATCC 51530 / DSM 4299 / JCM 9571 / NBRC 15438 / GSS1).